We begin with the raw amino-acid sequence, 511 residues long: Cobyric acid synthase (511 aa).

In terms of domain architecture, GATase cobBQ-type spans L251–F443. Catalysis depends on C332, which acts as the Nucleophile. The active site involves H435.

It belongs to the CobB/CobQ family. CobQ subfamily.

It functions in the pathway cofactor biosynthesis; adenosylcobalamin biosynthesis. Its function is as follows. Catalyzes amidations at positions B, D, E, and G on adenosylcobyrinic A,C-diamide. NH(2) groups are provided by glutamine, and one molecule of ATP is hydrogenolyzed for each amidation. The protein is Cobyric acid synthase of Listeria monocytogenes serotype 4b (strain CLIP80459).